The primary structure comprises 172 residues: Carotene biosynthesis-related protein CBR, chloroplastic (172 aa).

Positions 41–66 (AENNPSTPPPSSPSPPPPPPTPAAPT) are disordered. Over residues 46–63 (STPPPSSPSPPPPPPTPA) the composition is skewed to pro residues. The next 2 membrane-spanning stretches (helical) occupy residues 111 to 131 (PTLI…PAFA) and 152 to 172 (FAMI…IALF).

The protein belongs to the ELIP/psbS family.

Its subcellular location is the plastid. It localises to the chloroplast membrane. Functionally, putative zeaxanthin binding protein. That forms photoprotective complexes within the light-harvesting antennae. This Dunaliella salina (Green alga) protein is Carotene biosynthesis-related protein CBR, chloroplastic (CBR).